A 234-amino-acid chain; its full sequence is 1-(5-phosphoribosyl)-5-[(5-phosphoribosylamino)methylideneamino] imidazole-4-carboxamide isomerase (234 aa).

Aspartate 9 acts as the Proton acceptor in catalysis. Residue aspartate 131 is the Proton donor of the active site.

The protein belongs to the HisA/HisF family.

The protein resides in the cytoplasm. The enzyme catalyses 1-(5-phospho-beta-D-ribosyl)-5-[(5-phospho-beta-D-ribosylamino)methylideneamino]imidazole-4-carboxamide = 5-[(5-phospho-1-deoxy-D-ribulos-1-ylimino)methylamino]-1-(5-phospho-beta-D-ribosyl)imidazole-4-carboxamide. It participates in amino-acid biosynthesis; L-histidine biosynthesis; L-histidine from 5-phospho-alpha-D-ribose 1-diphosphate: step 4/9. This Staphylococcus aureus (strain MRSA252) protein is 1-(5-phosphoribosyl)-5-[(5-phosphoribosylamino)methylideneamino] imidazole-4-carboxamide isomerase.